We begin with the raw amino-acid sequence, 435 residues long: Membrane-bound ghrelin O-acyltransferase MBOAT4 (435 aa).

Residues 1–5 (MDWLQ) are Lumenal-facing. A helical transmembrane segment spans residues 6 to 26 (LFFLHPLSFYQGAAFPFALLF). Topologically, residues 27–40 (NYLCILDTFSTRAR) are cytoplasmic. The helical transmembrane segment at 41–56 (YLFLLAGGGVLAFAAM) threads the bilayer. Topologically, residues 57–59 (GPY) are lumenal. The helical transmembrane segment at 60 to 76 (SLLIFIPALCAVALVSF) threads the bilayer. The Cytoplasmic segment spans residues 77–82 (LSPQEV). The helical transmembrane segment at 83–101 (HRLTFFFQMGWQTLCHLGL) threads the bilayer. Residues 102-120 (HYTEYYLGEPPPVRFYITL) are Lumenal-facing. A helical transmembrane segment spans residues 121 to 136 (SSLMLLTQRVTSLSLD). Residues 137-206 (ICEGKVEAPR…YPSISFRALT (70 aa)) lie on the Cytoplasmic side of the membrane. The helical transmembrane segment at 207–227 (WRGLQILGLECLKVALRSAVS) threads the bilayer. Residues 228-240 (AGAGLDDCQRLEC) are Lumenal-facing. Residues 241–261 (IYLMWSTAWLFKLTYYSHWIL) form a helical membrane-spanning segment. Residues 262–324 (DDSLLHAAGF…RRLVFRKSRR (63 aa)) are Cytoplasmic-facing. Residues Asn307 and His338 contribute to the active site. Residues 325-338 (WPLLQTFAFSAWWH) form a helical membrane-spanning segment. Topologically, residues 339–340 (GL) are lumenal. The helical transmembrane segment at 341-357 (HPGQVFGFLCWSVMVKA) threads the bilayer. At 358–376 (DYLIHTFANVCIRSWPLRL) the chain is on the cytoplasmic side. Residues 377-397 (LYRALTWAHTQLIIAYIMLAV) traverse the membrane as a helical segment. Residues 398-407 (EGRSLSSLCQ) are Lumenal-facing. The helical transmembrane segment at 408–428 (LCCSYNSLFPVMYGLLLFLLA) threads the bilayer. Over 429–435 (ERKDKRN) the chain is Cytoplasmic.

Belongs to the membrane-bound acyltransferase family. Monomer. Post-translationally, not glycosylated. As to expression, highly expressed in stomach and pancreas. Lower expression in small intestine and colon. Very low expression in testis.

It localises to the endoplasmic reticulum membrane. The enzyme catalyses octanoyl-CoA + L-seryl-[protein] = O-octanoyl-L-seryl-[protein] + CoA. It carries out the reaction hexanoyl-CoA + L-seryl-[protein] = O-hexanoyl-L-seryl-[protein] + CoA. It catalyses the reaction decanoyl-CoA + L-seryl-[protein] = O-decanoyl-L-seryl-[protein] + CoA. The catalysed reaction is L-seryl-[protein] + acetyl-CoA = O-acetyl-L-seryl-[protein] + CoA. The enzyme catalyses L-seryl-[protein] + butanoyl-CoA = O-butanoyl-L-seryl-[protein] + CoA. It carries out the reaction pentanoyl-CoA + L-seryl-[protein] = O-pentanoyl-L-seryl-[protein] + CoA. It catalyses the reaction heptanoyl-CoA + L-seryl-[protein] = O-heptanoyl-L-seryl-[protein] + CoA. The catalysed reaction is nonanoyl-CoA + L-seryl-[protein] = O-nonanoyl-L-seryl-[protein] + CoA. The enzyme catalyses L-seryl-[protein] + dodecanoyl-CoA = O-dodecanoyl-L-seryl-[protein] + CoA. It carries out the reaction L-seryl-[protein] + tetradecanoyl-CoA = O-tetradecanoyl-L-seryl-[protein] + CoA. It catalyses the reaction a fatty acyl-CoA + L-seryl-[protein] = O-fatty acyl-L-seryl-[protein] + CoA. Inhibited by 1-[2-cyano-3,12-dioxooleana-1,9(11)- dien-28-oyl]ethylamide (CDDO-EA) with an IC(50) of 60 uM. Inhibited by Fe3+ and Cu2+ and the O-acyltransferase activity is completely blocked over 5 mM Fe3+ and 0.5 mM Cu2+. Catalyzes ghrelin acylation at 'Ser-3' using preferentially octanoyl-CoA, hexanoyl-CoA and decanoyl-CoA as acyl-CoA donors leading to ghrelin activity. In vitro also uses acyl-CoA donors of different lengths from short-chain (C2) to long-chain fatty acids (C16) knowing that acyl-CoA donors from butanoyl-CoA (C4) to dodecanoyl-CoA (C12) are more efficient compared to longer acyl-CoA donors, such as myristoyl-CoA (C14) and palmitoyl-CoA (C16) that are not efficient. In terms of biological role, inactive octanoyltransferase activity. In Mus musculus (Mouse), this protein is Membrane-bound ghrelin O-acyltransferase MBOAT4.